The primary structure comprises 383 residues: UDP-N-acetylenolpyruvoylglucosamine reductase (383 aa).

The 171-residue stretch at 42–212 folds into the FAD-binding PCMH-type domain; the sequence is LSCQAMQLIT…TRVGFKLHKD (171 aa). Residue R189 is part of the active site. S267 (proton donor) is an active-site residue. Residue E369 is part of the active site.

It belongs to the MurB family. Requires FAD as cofactor.

The protein localises to the cytoplasm. It carries out the reaction UDP-N-acetyl-alpha-D-muramate + NADP(+) = UDP-N-acetyl-3-O-(1-carboxyvinyl)-alpha-D-glucosamine + NADPH + H(+). It functions in the pathway cell wall biogenesis; peptidoglycan biosynthesis. Functionally, cell wall formation. The chain is UDP-N-acetylenolpyruvoylglucosamine reductase from Psychrobacter sp. (strain PRwf-1).